Consider the following 316-residue polypeptide: Transaldolase (316 aa).

Lys132 (schiff-base intermediate with substrate) is an active-site residue.

The protein belongs to the transaldolase family. Type 1 subfamily. Homodimer.

Its subcellular location is the cytoplasm. It catalyses the reaction D-sedoheptulose 7-phosphate + D-glyceraldehyde 3-phosphate = D-erythrose 4-phosphate + beta-D-fructose 6-phosphate. It functions in the pathway carbohydrate degradation; pentose phosphate pathway; D-glyceraldehyde 3-phosphate and beta-D-fructose 6-phosphate from D-ribose 5-phosphate and D-xylulose 5-phosphate (non-oxidative stage): step 2/3. Functionally, transaldolase is important for the balance of metabolites in the pentose-phosphate pathway. This is Transaldolase from Aliivibrio salmonicida (strain LFI1238) (Vibrio salmonicida (strain LFI1238)).